The following is a 145-amino-acid chain: Superoxide dismutase [Mn/Fe] (145 aa).

Residues His-10 and His-64 each contribute to the Fe(3+) site. The Mn(2+) site is built by His-10 and His-64. A disordered region spans residues 126–145; that stretch reads TSTANQDTPISEGKKPILGL.

Belongs to the iron/manganese superoxide dismutase family. Mn(2+) is required as a cofactor. It depends on Fe(3+) as a cofactor.

The catalysed reaction is 2 superoxide + 2 H(+) = H2O2 + O2. Functionally, destroys superoxide anion radicals which are normally produced within the cells and which are toxic to biological systems. Catalyzes the dismutation of superoxide anion radicals into O2 and H2O2 by successive reduction and oxidation of the transition metal ion at the active site. The protein is Superoxide dismutase [Mn/Fe] (sodA) of Streptococcus oralis.